We begin with the raw amino-acid sequence, 450 residues long: MSIHMFPSDFKWGVATAAYQIEGAYNEDGRGMSIWDTFAHTPGKVKNGDNGNVACDSYHRVEEDVQLLKDLGVKVYRFSISWPRVLPQGTGEVNRAGLDYYHRLVDELLANGIEPFCTLYHWDLPQALQDQGGWGSRITIDAFAEYAELMFKELGGKIKQWITFNEPWCMAFLSNYLGVHAPGNKDLQLAIDVSHHLLVAHGRAVTLFRELGISGEIGIAPNTSWAVPYRRTKEDMEACLRVNGWSGDWYLDPIYFGEYPKFMLDWYENLGYKPPIVDGDMELIHQPIDFIGINYYTSSMNRYNPGEAGGMLSSEAISMGAPKTDIGWEIYAEGLYDLLRYTADKYGNPTLYITENGACYNDGLSLDGRIHDQRRIDYLAMHLIQASRAIEDGINLKGYMEWSLMDNFEWAEGYGMRFGLVHVDYDTLVRTPKDSFYWYKGVISRGWLDL.

The active-site Proton donor is the Glu-166. Glu-355 serves as the catalytic Nucleophile.

It belongs to the glycosyl hydrolase 1 family.

It catalyses the reaction Hydrolysis of terminal, non-reducing beta-D-glucosyl residues with release of beta-D-glucose.. In Niallia circulans (Bacillus circulans), this protein is Beta-glucosidase (bglA).